Reading from the N-terminus, the 245-residue chain is tRNA (guanine-N(1)-)-methyltransferase (245 aa).

Residues Gly-114 and 134–139 (IGDYIL) each bind S-adenosyl-L-methionine.

Belongs to the RNA methyltransferase TrmD family. As to quaternary structure, homodimer.

Its subcellular location is the cytoplasm. It catalyses the reaction guanosine(37) in tRNA + S-adenosyl-L-methionine = N(1)-methylguanosine(37) in tRNA + S-adenosyl-L-homocysteine + H(+). Its function is as follows. Specifically methylates guanosine-37 in various tRNAs. The chain is tRNA (guanine-N(1)-)-methyltransferase from Listeria welshimeri serovar 6b (strain ATCC 35897 / DSM 20650 / CCUG 15529 / CIP 8149 / NCTC 11857 / SLCC 5334 / V8).